The chain runs to 88 residues: UPF0297 protein BcerKBAB4_4234 (88 aa).

The protein belongs to the UPF0297 family.

This is UPF0297 protein BcerKBAB4_4234 from Bacillus mycoides (strain KBAB4) (Bacillus weihenstephanensis).